The chain runs to 488 residues: Glutamyl-tRNA(Gln) amidotransferase subunit A (488 aa).

Catalysis depends on charge relay system residues Lys78 and Ser153. Residue Ser177 is the Acyl-ester intermediate of the active site.

This sequence belongs to the amidase family. GatA subfamily. In terms of assembly, heterotrimer of A, B and C subunits.

It carries out the reaction L-glutamyl-tRNA(Gln) + L-glutamine + ATP + H2O = L-glutaminyl-tRNA(Gln) + L-glutamate + ADP + phosphate + H(+). Its function is as follows. Allows the formation of correctly charged Gln-tRNA(Gln) through the transamidation of misacylated Glu-tRNA(Gln) in organisms which lack glutaminyl-tRNA synthetase. The reaction takes place in the presence of glutamine and ATP through an activated gamma-phospho-Glu-tRNA(Gln). The sequence is that of Glutamyl-tRNA(Gln) amidotransferase subunit A from Thermoanaerobacter pseudethanolicus (strain ATCC 33223 / 39E) (Clostridium thermohydrosulfuricum).